A 276-amino-acid chain; its full sequence is Diaminopimelate epimerase (276 aa).

3 residues coordinate substrate: asparagine 13, glutamine 46, and asparagine 66. Cysteine 75 acts as the Proton donor in catalysis. Substrate is bound by residues 76–77 (GN), asparagine 159, asparagine 192, and 210–211 (ER). Cysteine 219 serves as the catalytic Proton acceptor. 220 to 221 (GT) contacts substrate.

Belongs to the diaminopimelate epimerase family. As to quaternary structure, homodimer.

Its subcellular location is the cytoplasm. It carries out the reaction (2S,6S)-2,6-diaminopimelate = meso-2,6-diaminopimelate. Its pathway is amino-acid biosynthesis; L-lysine biosynthesis via DAP pathway; DL-2,6-diaminopimelate from LL-2,6-diaminopimelate: step 1/1. Functionally, catalyzes the stereoinversion of LL-2,6-diaminopimelate (L,L-DAP) to meso-diaminopimelate (meso-DAP), a precursor of L-lysine and an essential component of the bacterial peptidoglycan. The polypeptide is Diaminopimelate epimerase (Pseudoalteromonas translucida (strain TAC 125)).